We begin with the raw amino-acid sequence, 270 residues long: 3-phenylpropionate-dihydrodiol/cinnamic acid-dihydrodiol dehydrogenase (270 aa).

Residue 10–34 participates in NAD(+) binding; it reads FITGGGSGLGLALVERFIEEGAQVA. Serine 143 contributes to the substrate binding site. Tyrosine 156 functions as the Proton acceptor in the catalytic mechanism.

It belongs to the short-chain dehydrogenases/reductases (SDR) family.

It catalyses the reaction 3-(cis-5,6-dihydroxycyclohexa-1,3-dien-1-yl)propanoate + NAD(+) = 3-(2,3-dihydroxyphenyl)propanoate + NADH + H(+). The catalysed reaction is (2E)-3-(cis-5,6-dihydroxycyclohexa-1,3-dien-1-yl)prop-2-enoate + NAD(+) = (2E)-3-(2,3-dihydroxyphenyl)prop-2-enoate + NADH + H(+). It functions in the pathway aromatic compound metabolism; 3-phenylpropanoate degradation. Converts 3-phenylpropionate-dihydrodiol (PP-dihydrodiol) and cinnamic acid-dihydrodiol (CI-dihydrodiol) into 3-(2,3-dihydroxylphenyl)propanoic acid (DHPP) and 2,3-dihydroxicinnamic acid (DHCI), respectively. The protein is 3-phenylpropionate-dihydrodiol/cinnamic acid-dihydrodiol dehydrogenase of Shigella sonnei (strain Ss046).